A 537-amino-acid polypeptide reads, in one-letter code: Interleukin-2 receptor subunit beta (537 aa).

A signal peptide spans methionine 1–alanine 26. At alanine 27–glutamate 239 the chain is on the extracellular side. Cysteine 36 and cysteine 46 form a disulfide bridge. N-linked (GlcNAc...) asparagine glycans are attached at residues asparagine 43, asparagine 55, and asparagine 71. A disulfide bond links cysteine 74 and cysteine 86. The 101-residue stretch at alanine 135–alanine 235 folds into the Fibronectin type-III domain. A glycan (N-linked (GlcNAc...) asparagine) is linked at asparagine 150. A WSXWS motif motif is present at residues tryptophan 221 to serine 225. Residues isoleucine 240–valine 267 form a helical membrane-spanning segment. The Cytoplasmic segment spans residues lysine 268–isoleucine 537. The Box 1 motif signature appears at leucine 280–serine 288. Disordered stretches follow at residues alanine 442–serine 466 and glutamate 479–valine 498. The span at methionine 487–serine 497 shows a compositional bias: polar residues.

Belongs to the type I cytokine receptor family. Type 4 subfamily. As to quaternary structure, non-covalent dimer of an alpha and a beta subunit. IL2R exists in 3 different forms: a high affinity dimer, an intermediate affinity monomer (beta subunit), and a low affinity monomer (alpha subunit). The high and intermediate affinity forms also associate with a gamma subunit. Interacts with SHB upon interleukin stimulation.

It is found in the cell membrane. Its subcellular location is the cell surface. Functionally, receptor for interleukin-2. This beta subunit is involved in receptor mediated endocytosis and transduces the mitogenic signals of IL2. Probably in association with IL15RA, involved in the stimulation of neutrophil phagocytosis by IL15. The polypeptide is Interleukin-2 receptor subunit beta (Il2rb) (Rattus norvegicus (Rat)).